Consider the following 303-residue polypeptide: Siderophore enterobactin esterase (303 aa).

It belongs to the esterase D family. As to quaternary structure, homodimer.

It carries out the reaction enterobactin + 3 H2O = 3 N-(2,3-dihydroxybenzoyl)-L-serine + 2 H(+). In terms of biological role, displays specific enterobactin (ENB) esterase activity required for intracellular release of iron. Enterobactin is a xenosiderophore that is selectively produced by Gram-negative Enterobacteriaceae. The affinity for enterobactin is quite high, potentially due to the low natural abundance of this xenosiderophore in fungal habitats. Does not hydrolyze triacetylfusarinine C (TAFC). The chain is Siderophore enterobactin esterase from Emericella nidulans (strain FGSC A4 / ATCC 38163 / CBS 112.46 / NRRL 194 / M139) (Aspergillus nidulans).